A 4731-amino-acid polypeptide reads, in one-letter code: Dynein axonemal heavy chain 8 (4731 aa).

A disordered region spans residues 1–145; that stretch reads MESEEGNAEP…SKFRRSMTGI (145 aa). Pro residues predominate over residues 9–55; the sequence is EPPPPSEEAPPPVVEEAPPPLPPEDTAPPPPEEQAPPPEGDAAPPPT. Residues 66-75 are compositionally biased toward basic and acidic residues; sequence EAPHPEDPKL. Acidic residues predominate over residues 94-106; that stretch reads SDEEVTLPEDEES. Polar residues predominate over residues 122–133; it reads SVLSDGISQSSR. The stretch at 145–169 forms a coiled coil; it reads IPNLQETLKEKQARFREARENRKMK. Ser917 bears the Phosphoserine mark. A disordered region spans residues 1177-1201; sequence FQNNSRGSDQPPASGKPLKKEERSF. The stretch at 1543–1567 forms a coiled coil; it reads DVDIEKINAELQEFQNRCRKLPRAL. 4 AAA regions span residues 2049 to 2271, 2331 to 2550, 2657 to 2910, and 3021 to 3275; these read YQNE…VLRT, SAVD…KLSL, FYPT…IWQG, and QFNE…YRRR. ATP-binding positions include 2087 to 2094 and 2369 to 2376; these read GPAGTGKT and GPSGSGKT. The stalk stretch occupies residues 3290-3587; the sequence is YKSIYTDKVK…MDLLNDADMC (298 aa). 3 coiled-coil regions span residues 3313–3405, 3531–3583, and 3836–3871; these read DKLM…ALNT, LKAN…LLND, and RVIL…DNLL. AAA stretches follow at residues 3673-3903 and 4118-4332; these read LVDP…EVSE and ARKY…FIQN.

It belongs to the dynein heavy chain family. Consists of at least two heavy chains and a number of intermediate and light chains. As to expression, isoform 1 and/or isoform 2 are expressed in spermatocytes and mature sperm (at protein level). Testis-specific. Accumulates exclusively in mid to late spermatocytes.

The protein resides in the cytoplasm. It localises to the cytoskeleton. Its subcellular location is the flagellum axoneme. In terms of biological role, force generating protein component of the outer dynein arms (ODAs) in the sperm flagellum. Produces force towards the minus ends of microtubules. Dynein has ATPase activity; the force-producing power stroke is thought to occur on release of ADP. Involved in sperm motility; implicated in sperm flagellar assembly. This chain is Dynein axonemal heavy chain 8 (Dnah8), found in Mus musculus (Mouse).